The sequence spans 338 residues: Tetraacyldisaccharide 4'-kinase (338 aa).

An ATP-binding site is contributed by 49–56 (TVGGTGKT).

It belongs to the LpxK family.

The catalysed reaction is a lipid A disaccharide + ATP = a lipid IVA + ADP + H(+). The protein operates within glycolipid biosynthesis; lipid IV(A) biosynthesis; lipid IV(A) from (3R)-3-hydroxytetradecanoyl-[acyl-carrier-protein] and UDP-N-acetyl-alpha-D-glucosamine: step 6/6. Functionally, transfers the gamma-phosphate of ATP to the 4'-position of a tetraacyldisaccharide 1-phosphate intermediate (termed DS-1-P) to form tetraacyldisaccharide 1,4'-bis-phosphate (lipid IVA). The chain is Tetraacyldisaccharide 4'-kinase from Geobacter metallireducens (strain ATCC 53774 / DSM 7210 / GS-15).